The sequence spans 400 residues: Enoyl-[acyl-carrier-protein] reductase [NADH] (400 aa).

NAD(+)-binding positions include 48–53, 74–75, 111–112, and 139–140; these read GASTGY, FE, DA, and LA. A substrate-binding site is contributed by Tyr-225. Tyr-235 serves as the catalytic Proton donor. NAD(+)-binding positions include Lys-244 and 273–275; that span reads VVT.

Belongs to the TER reductase family. Monomer.

The enzyme catalyses a 2,3-saturated acyl-[ACP] + NAD(+) = a (2E)-enoyl-[ACP] + NADH + H(+). It functions in the pathway lipid metabolism; fatty acid biosynthesis. Functionally, involved in the final reduction of the elongation cycle of fatty acid synthesis (FAS II). Catalyzes the reduction of a carbon-carbon double bond in an enoyl moiety that is covalently linked to an acyl carrier protein (ACP). The chain is Enoyl-[acyl-carrier-protein] reductase [NADH] from Burkholderia cenocepacia (strain ATCC BAA-245 / DSM 16553 / LMG 16656 / NCTC 13227 / J2315 / CF5610) (Burkholderia cepacia (strain J2315)).